Here is a 111-residue protein sequence, read N- to C-terminus: SPbeta prophage-derived uncharacterized protein YopW (111 aa).

The chain is SPbeta prophage-derived uncharacterized protein YopW (yopW) from Bacillus subtilis (strain 168).